Reading from the N-terminus, the 309-residue chain is Taste receptor type 2 member 20 (309 aa).

Residues 1 to 6 are Extracellular-facing; the sequence is MMSFLH. Residues 7-27 form a helical membrane-spanning segment; sequence IVFSILVVVAFILGNFANGFI. Residues 28-46 are Cytoplasmic-facing; it reads ALINFIAWVKRQKISSADQ. Residues 47 to 67 traverse the membrane as a helical segment; it reads IIAALAVSRVGLLWVILLHWY. Topologically, residues 68-79 are extracellular; it reads STVLNPTSSNLK. Residues 80–100 traverse the membrane as a helical segment; it reads VTIFISNAWAVTNHFSIWLAA. Topologically, residues 101–125 are cytoplasmic; the sequence is SLSIFYLLKIVNFSRLIFHHLKRKA. The helical transmembrane segment at 126–146 threads the bilayer; that stretch reads KSVVLVIVLGSLFFLVCHLVM. Topologically, residues 147 to 178 are extracellular; that stretch reads KSTYINVWTEEYEGNVTWKIKLRNAMHLSNLT. N-linked (GlcNAc...) asparagine glycosylation is found at N161 and N176. A helical membrane pass occupies residues 179–199; that stretch reads VAMLANLIPFTLTLISFLLLI. The Cytoplasmic portion of the chain corresponds to 200-229; sequence YSLCKHLKKMQLHGKGSQDPSTKIHIKALQ. Residues 230–250 form a helical membrane-spanning segment; that stretch reads TVTSFLILLAIYFLCLITSFW. At 251 to 259 the chain is on the extracellular side; sequence NSKMRPKEI. A helical membrane pass occupies residues 260-280; that stretch reads VLMLCQAFGIIYPSFHSFILI. Residues 281-309 lie on the Cytoplasmic side of the membrane; sequence WGNKTLKQTFLSVLWRVTCWAKGQNQSTP.

Belongs to the G-protein coupled receptor T2R family.

It is found in the membrane. Its function is as follows. Receptor that may play a role in the perception of bitterness and is gustducin-linked. May play a role in sensing the chemical composition of the gastrointestinal content. The activity of this receptor may stimulate alpha gustducin, mediate PLC-beta-2 activation and lead to the gating of TRPM5. The protein is Taste receptor type 2 member 20 (TAS2R20) of Gorilla gorilla gorilla (Western lowland gorilla).